Reading from the N-terminus, the 2057-residue chain is Myosin heavy chain, non-muscle (2057 aa).

One can recognise a Myosin N-terminal SH3-like domain in the interval 78–128 (HRSVLVWVPHENQGFVAASIKREHGDEVEVELAETGKRVMILRDDIQKMNP). Residues 132 to 867 (DKVEDMAELT…VLAHLEEERD (736 aa)) enclose the Myosin motor domain. ATP is bound at residue 225–232 (GESGAGKT). Positions 250–260 (PKGSGAVPHPA) are 25 kDa/50 kDa junction. A 50 kDa/20 kDa junction region spans residues 722-734 (DTQFGARTRKGMF). Residues 745-767 (LAKLMDTLRNTNPNFVRCIIPNH) form an actin-binding region. Residues 782 to 798 (QLRCNGVLEGIRICRQG) form a reactive sulfhydryl/actin-binding region. In terms of domain architecture, IQ spans 870–899 (ISDLIVNFQAFCRGFLARRNYQKRLQQLNA). A coiled-coil region spans residues 926-2016 (KPLLEVTKQE…SLKTKLRRTG (1091 aa)). Disordered stretches follow at residues 1124–1144 (EERL…KRKI), 1782–1802 (SSER…EEIA), and 2008–2057 (LKTK…DSAN). An alpha-helical tailpiece (LMM) region spans residues 1343–2010 (SQIAELQVKL…MNREINSLKT (668 aa)). Positions 1343–2057 (SQIAELQVKL…ESLDGEDSAN (715 aa)) are light meromyosin (LMM). Over residues 1782-1792 (SSERARRAAET) the composition is skewed to basic and acidic residues. Residues 2011–2057 (KLRRTGGIGLSSSRLTGTPSSKRAGGGGGSDDSSVQDESLDGEDSAN) are globular tailpiece. Phosphoserine occurs at positions 2021 and 2022. Residues 2044 to 2057 (SVQDESLDGEDSAN) are compositionally biased toward acidic residues.

Belongs to the TRAFAC class myosin-kinesin ATPase superfamily. Myosin family. Interacts with sau. Interacts with ck and Ubr3. Ubiquitinated. In Johnston's organ, expressed in neurons and scolopale cells.

Its subcellular location is the cell projection. It localises to the cilium. The protein localises to the cytoplasm. Functionally, nonmuscle myosin appears to be responsible for cellularization. Required for morphogenesis and cytokinesis. Necessary for auditory transduction: plays a role in Johnston's organ organization by acting in scolopidial apical attachment. Interaction with the myosin ck may be important for this function. Localizes to and defines the trailing edge of cells during larval epidermal wound healing. This process is dependent on the phosphatidylinositol 4-phosphate 5-kinase sktl/skittles. The polypeptide is Myosin heavy chain, non-muscle (zip) (Drosophila melanogaster (Fruit fly)).